The chain runs to 1055 residues: Ephrin type-B receptor 2 (1055 aa).

Residues 1 to 18 (MALRRLGAALLLLPLLAA) form the signal peptide. Over 19–543 (VEETLMDSTT…QTSIQEKLPL (525 aa)) the chain is Extracellular. One can recognise an Eph LBD domain in the interval 20–202 (EETLMDSTTA…FYRKCPRIIQ (183 aa)). 2 disulfides stabilise this stretch: C62-C184 and C97-C107. N-linked (GlcNAc...) asparagine glycosylation is found at N265, N336, N428, and N482. Fibronectin type-III domains are found at residues 324 to 434 (IPSA…TNQA) and 435 to 530 (APSA…TMTE). A helical transmembrane segment spans residues 544–564 (IIGSSAAGLVFLIAVVVIAIV). Over 565–1055 (CNRRGFERAD…KESNDCSCGG (491 aa)) the chain is Cytoplasmic. In terms of domain architecture, Protein kinase spans 621–884 (VKIEQVIGAG…QIVNTLDKMI (264 aa)). ATP is bound by residues 627–635 (IGAGEFGEV) and K653. Catalysis depends on D746, which acts as the Proton acceptor. A Glycyl lysine isopeptide (Lys-Gly) (interchain with G-Cter in ubiquitin) cross-link involves residue K891. Residues 913–977 (TSFNTVDEWL…LNSIQVMRAQ (65 aa)) enclose the SAM domain. Phosphoserine is present on residues S983 and V984. Residues 984–986 (VEG) carry the PDZ-binding (in isoform 2) motif. Residues 990 to 1055 (ARRPRATGRT…KESNDCSCGG (66 aa)) are disordered. Residues 991 to 1002 (RRPRATGRTKRC) show a composition bias toward basic residues. Positions 1025–1049 (KKTDPGRGREIQGIFFKEDSHKESN) are enriched in basic and acidic residues.

Belongs to the protein kinase superfamily. Tyr protein kinase family. Ephrin receptor subfamily. Heterotetramer upon binding of the ligand. The heterotetramer is composed of an ephrin dimer and a receptor dimer. Interacts (via PDZ-binding motif) with GRIP1 and PICK1 (via PDZ domain). Interacts with ARHGEF15; mediates ARHGEF15 phosphorylation, ubiquitination and degradation by the proteasome. Interacts with AQP1; involved in endolymph production in the inner ear. Interacts with SPSB1 and SPSB4. The phosphorylated form interacts with RASA1 (via SH2 domain 1). Interacts with EFNA5. Interacts with SH2D3C. Post-translationally, autophosphorylated; ligand binding stimulates autophosphorylation on tyrosine residues. In terms of processing, polyubiquitinated; ligand binding stimulates ubiquitination. Ubiquitinated by RNF186 at Lys-891, mainly through 'Lys-27'-linked polyubiquitin chains. Ubiquitinated by CRL2(KLHDC2) E3 ligase complex. Ligand binding induces cleavage by matrix metalloproteinases (MMPs) such as MMP7/MMP9, producing an EphB2/N-terminal fragment (NTF) and a C-terminal long fragment (EphB2-LF). EphB2-LF is further cleaved by MMPs, producing EphB2/CTF1 which is further cleaved by the PS1/gamma-secretase producing EphB2/CTF2. Brain, heart, lung, kidney, placenta, pancreas, liver and skeletal muscle. Preferentially expressed in fetal brain.

It localises to the cell membrane. The protein localises to the cell projection. It is found in the axon. Its subcellular location is the dendrite. The catalysed reaction is L-tyrosyl-[protein] + ATP = O-phospho-L-tyrosyl-[protein] + ADP + H(+). Receptor tyrosine kinase which binds promiscuously transmembrane ephrin-B family ligands residing on adjacent cells, leading to contact-dependent bidirectional signaling into neighboring cells. The signaling pathway downstream of the receptor is referred to as forward signaling while the signaling pathway downstream of the ephrin ligand is referred to as reverse signaling. Functions in axon guidance during development. Involved in the guidance of commissural axons, that form a major interhemispheric connection between the 2 temporal lobes of the cerebral cortex. Also involved in guidance of contralateral inner ear efferent growth cones at the midline and of retinal ganglion cell axons to the optic disk. In addition to axon guidance, also regulates dendritic spines development and maturation and stimulates the formation of excitatory synapses. Upon activation by EFNB1, abolishes the ARHGEF15-mediated negative regulation on excitatory synapse formation. Controls other aspects of development including angiogenesis, palate development and in inner ear development through regulation of endolymph production. Forward and reverse signaling through the EFNB2/EPHB2 complex regulate movement and adhesion of cells that tubularize the urethra and septate the cloaca. May function as a tumor suppressor. May be involved in the regulation of platelet activation and blood coagulation. The sequence is that of Ephrin type-B receptor 2 (EPHB2) from Homo sapiens (Human).